The chain runs to 129 residues: Small ribosomal subunit protein uS11 (129 aa).

It belongs to the universal ribosomal protein uS11 family. As to quaternary structure, part of the 30S ribosomal subunit. Interacts with proteins S7 and S18. Binds to IF-3.

Functionally, located on the platform of the 30S subunit, it bridges several disparate RNA helices of the 16S rRNA. Forms part of the Shine-Dalgarno cleft in the 70S ribosome. The protein is Small ribosomal subunit protein uS11 of Maricaulis maris (strain MCS10) (Caulobacter maris).